A 405-amino-acid chain; its full sequence is Elongation factor Tu (405 aa).

The 206-residue stretch at 10 to 215 (KPHVNVGTIG…AVDSYIPTPE (206 aa)) folds into the tr-type G domain. The segment at 19–26 (GHVDHGKT) is G1. 19 to 26 (GHVDHGKT) provides a ligand contact to GTP. Residue Thr26 participates in Mg(2+) binding. Residues 61–65 (GITIN) are G2. The segment at 82–85 (DCPG) is G3. GTP is bound by residues 82–86 (DCPGH) and 137–140 (NKVD). Residues 137-140 (NKVD) form a G4 region. Residues 175-177 (SAL) are G5.

The protein belongs to the TRAFAC class translation factor GTPase superfamily. Classic translation factor GTPase family. EF-Tu/EF-1A subfamily. As to quaternary structure, monomer.

It localises to the cytoplasm. It catalyses the reaction GTP + H2O = GDP + phosphate + H(+). Its function is as follows. GTP hydrolase that promotes the GTP-dependent binding of aminoacyl-tRNA to the A-site of ribosomes during protein biosynthesis. The chain is Elongation factor Tu from Deinonema sp.